The primary structure comprises 317 residues: tRNA(Ile)-lysidine synthase (317 aa).

Residue 30–35 (SGGSDS) participates in ATP binding.

It belongs to the tRNA(Ile)-lysidine synthase family.

Its subcellular location is the cytoplasm. The catalysed reaction is cytidine(34) in tRNA(Ile2) + L-lysine + ATP = lysidine(34) in tRNA(Ile2) + AMP + diphosphate + H(+). Its function is as follows. Ligates lysine onto the cytidine present at position 34 of the AUA codon-specific tRNA(Ile) that contains the anticodon CAU, in an ATP-dependent manner. Cytidine is converted to lysidine, thus changing the amino acid specificity of the tRNA from methionine to isoleucine. The sequence is that of tRNA(Ile)-lysidine synthase from Chlamydia felis (strain Fe/C-56) (Chlamydophila felis).